Reading from the N-terminus, the 222-residue chain is Flagellar L-ring protein (222 aa).

The N-terminal stretch at 1–18 is a signal peptide; it reads MKTTRAIAMLGLLLGLAA. Residue C19 is the site of N-palmitoyl cysteine attachment. C19 carries S-diacylglycerol cysteine lipidation.

The protein belongs to the FlgH family. The basal body constitutes a major portion of the flagellar organelle and consists of four rings (L,P,S, and M) mounted on a central rod.

The protein resides in the cell outer membrane. It is found in the bacterial flagellum basal body. Its function is as follows. Assembles around the rod to form the L-ring and probably protects the motor/basal body from shearing forces during rotation. This is Flagellar L-ring protein from Thiobacillus denitrificans (strain ATCC 25259 / T1).